The primary structure comprises 450 residues: MEAVIKDLIRDQGVRGEGGSTAGLSATPPASLPGSLTNVKALQKSPGPQRERKSSSSSEDRNRMKTLGRRDSSDDWEIPDGQITVGQRIGSGSFGTVYKGKWHGDVAVKMLNVTAPTPQQLQAFKNEVGVLRKTRHVNILLFMGYSTKPQLAIVTQWCEGSSLYHHLHIIETKFEMIKLIDIARQTAQGMDYLHAKSIIHRDLKSNNIFLHEDLTVKIGDFGLATVKSRWSGSHQFEQLSGSILWMAPEVIRMQDKNPYSFQSDVYAFGIVLYELMTGQLPYSNINNRDQIIFMVGRGYLSPDLSKVRSNCPKAMKRLMAECLKKKRDERPLFPQILASIELLARSLPKIHRSASEPSLNRAGFQTEDFSLYACASPKTPIQAGGIGEWAVHLLKGLLLGLVVILLLVVCLPCLLQCVSSSIRKMIDNSLGYREEYKKLQEAYKQPERRA.

2 stretches are compositionally biased toward basic and acidic residues: residues 1–14 and 49–73; these read MEAV…DQGV and QRER…RDSS. Residues 1–80 are disordered; it reads MEAVIKDLIR…DSSDDWEIPD (80 aa). The region spanning 83 to 343 is the Protein kinase domain; sequence ITVGQRIGSG…PQILASIELL (261 aa). ATP contacts are provided by residues 89–97 and Lys109; that span reads IGSGSFGTV. Residue Asp202 is the Proton acceptor of the active site.

Belongs to the protein kinase superfamily. TKL Ser/Thr protein kinase family. RAF subfamily.

The catalysed reaction is L-seryl-[protein] + ATP = O-phospho-L-seryl-[protein] + ADP + H(+). It catalyses the reaction L-threonyl-[protein] + ATP = O-phospho-L-threonyl-[protein] + ADP + H(+). This is Serine/threonine-protein kinase-transforming protein Rmil (V-RMIL) from Avian rous-associated virus type 1.